Reading from the N-terminus, the 213-residue chain is Pyrrolidone-carboxylate peptidase (213 aa).

Catalysis depends on residues Glu-78, Cys-141, and His-165.

The protein belongs to the peptidase C15 family. Homotetramer.

Its subcellular location is the cytoplasm. The catalysed reaction is Release of an N-terminal pyroglutamyl group from a polypeptide, the second amino acid generally not being Pro.. Removes 5-oxoproline from various penultimate amino acid residues except L-proline. The protein is Pyrrolidone-carboxylate peptidase of Clostridium perfringens (strain ATCC 13124 / DSM 756 / JCM 1290 / NCIMB 6125 / NCTC 8237 / Type A).